The following is a 469-amino-acid chain: MSTESEISVRIRGIYSTALTKLLLDKGFKIVQPSDIIAERLGLEKSYEDFDIDIYDRNHGITVVGTKVEEIRKVLEEELIDVFFRKLPYKLYGVYKGIVVKRDDRYVYVDIGNAIGTVLIEELPDATEGDEVIVQVKKHNVLPHLSVLITIPGDYAVLIPKPIGVQRHVKISRKIRDPEERERLRILGLSVNLGEWGILWRTAAAYKEWSVLRDEIVRLSKVADKLKEAEKYSAPAEIIEGRNIYEIEFGGGAKKKLDEIRNKVVPTIEGHHQYKSYDPEFTLAVEVAEGILAKMPSQRQKISEGFIEAIVNSKGPKLGWMFTLNHVKPDGQVIKIGPGEVIEVSVKPLKVKIRRNLKPGRVYDGLEVPIEPGDYAITEIEAGKWWFVHRYYDRNGNLKGEFYNINTPVEIYPDKARYIDLEVDIVKWPDGKKEIIDKEKLKEHYEDGIISEKLYKSVLRIVQEIYEKV.

This sequence belongs to the FAU-1 family.

Functionally, probable RNase involved in rRNA stability through maturation and/or degradation of precursor rRNAs. Binds to RNA in loop regions with AU-rich sequences. This chain is Probable ribonuclease FAU-1, found in Pyrococcus horikoshii (strain ATCC 700860 / DSM 12428 / JCM 9974 / NBRC 100139 / OT-3).